The sequence spans 404 residues: AT-hook motif nuclear-localized protein 3 (404 aa).

Disordered regions lie at residues 1 to 51 (MEER…VPPT), 70 to 100 (PFSL…PDGT), and 113 to 133 (SVPL…GKSN). Residues 7-19 (TNINNNITSSFGL) show a composition bias toward polar residues. Over residues 35-51 (DPPPRPENPNPFLVPPT) the composition is skewed to pro residues. A compositionally biased stretch (polar residues) spans 71-83 (FSLTMPTENTSAE). Positions 86–94 (KKKRGRPRK) match the Bipartite nuclear localization signal motif. Residues 86 to 98 (KKKRGRPRKYNPD) constitute a DNA-binding region (a.T hook). Residues 123–133 (RKRGRGRGKSN) show a composition bias toward basic residues. Residues 163–308 (GANFTPHVLI…RFGAQPSSIS (146 aa)) enclose the PPC domain. Positions 359–404 (PFSSIPVGGGGGGEVGEEEGEEDDDELEGEDEEFGGDSQSDNEIPS) are disordered. The span at 373–393 (VGEEEGEEDDDELEGEDEEFG) shows a compositional bias: acidic residues.

As to quaternary structure, homodimer. Interacts with AHL4. Expressed in both procambium and xylem precursors of the root meristem. Also detected in the endodermis in the late elongation zone and onwards.

It localises to the nucleus. In terms of biological role, transcription factor that specifically binds AT-rich DNA sequences related to the nuclear matrix attachment regions (MARs). Acts redundantly with AHL4 to regulate the formation of tissue boundary between the xylem and procambium in the root meristem. This is AT-hook motif nuclear-localized protein 3 from Arabidopsis thaliana (Mouse-ear cress).